The chain runs to 221 residues: Small ribosomal subunit protein uS2 (221 aa).

The disordered stretch occupies residues 202 to 221 (KVKMPQQNQRGRPQRRFQRR).

It belongs to the universal ribosomal protein uS2 family.

The chain is Small ribosomal subunit protein uS2 from Methanococcus vannielii (strain ATCC 35089 / DSM 1224 / JCM 13029 / OCM 148 / SB).